Reading from the N-terminus, the 539-residue chain is Dihydrolipoyllysine-residue acetyltransferase component 2 of pyruvate dehydrogenase complex, mitochondrial (539 aa).

The transit peptide at 1–102 (MASRIINHSK…SSQMRSVRGF (102 aa)) directs the protein to the mitochondrion. The segment at 102 to 122 (FSSSSDLPPHQEIGMPSLSPT) is disordered. The Lipoyl-binding domain maps to 111-187 (HQEIGMPSLS…QVGEVIAITV (77 aa)). The residue at position 152 (lysine 152) is an N6-lipoyllysine. Residues 196–244 (FKDYTPSSDTGPAAPEAKPAPSLPKEEKVEKPASAPEAKISKPSSAPSE) form a disordered region. Positions 248-285 (FASPLARKLAEDNNVPLSSIKGTGPEGRIVKADVEDFL) constitute a Peripheral subunit-binding (PSBD) domain. Residues histidine 512 and aspartate 516 contribute to the active site.

It belongs to the 2-oxoacid dehydrogenase family. (R)-lipoate serves as cofactor.

The protein localises to the mitochondrion matrix. It catalyses the reaction N(6)-[(R)-dihydrolipoyl]-L-lysyl-[protein] + acetyl-CoA = N(6)-[(R)-S(8)-acetyldihydrolipoyl]-L-lysyl-[protein] + CoA. Functionally, the pyruvate dehydrogenase complex catalyzes the overall conversion of pyruvate to acetyl-CoA and CO(2). It contains multiple copies of three enzymatic components: pyruvate dehydrogenase (E1), dihydrolipoamide acetyltransferase (E2) and lipoamide dehydrogenase (E3). This is Dihydrolipoyllysine-residue acetyltransferase component 2 of pyruvate dehydrogenase complex, mitochondrial from Arabidopsis thaliana (Mouse-ear cress).